A 375-amino-acid chain; its full sequence is PqqA peptide cyclase (375 aa).

In terms of domain architecture, Radical SAM core spans 18 to 235 (ILPPMAMLAE…EAREKYQGIL (218 aa)). [4Fe-4S] cluster-binding residues include Cys-32, Cys-36, and Cys-39.

The protein belongs to the radical SAM superfamily. PqqE family. In terms of assembly, interacts with PqqD. The interaction is necessary for activity of PqqE. [4Fe-4S] cluster serves as cofactor.

It carries out the reaction [PQQ precursor protein] + S-adenosyl-L-methionine = E-Y cross-linked-[PQQ precursor protein] + 5'-deoxyadenosine + L-methionine + H(+). The protein operates within cofactor biosynthesis; pyrroloquinoline quinone biosynthesis. Functionally, catalyzes the cross-linking of a glutamate residue and a tyrosine residue in the PqqA protein as part of the biosynthesis of pyrroloquinoline quinone (PQQ). The protein is PqqA peptide cyclase of Rhizobium meliloti (strain 1021) (Ensifer meliloti).